The chain runs to 128 residues: NHP2-like protein 1 (128 aa).

N-acetylmethionine is present on methionine 1. The residue at position 2 (threonine 2) is an N-acetylthreonine; in NHP2-like protein 1, N-terminally processed. Lysine 21 carries the post-translational modification N6-acetyllysine. The interaction with U4 snRNA and U4atac snRNA stretch occupies residues arginine 36–arginine 48. The tract at residues serine 96–valine 128 is important for U4 snRNA-binding. A Phosphoserine modification is found at serine 122.

This sequence belongs to the eukaryotic ribosomal protein eL8 family. In terms of assembly, identified in the spliceosome B complex. Component of the U4/U6-U5 tri-snRNP complex composed of the U4, U6 and U5 snRNAs and at least PRPF3, PRPF4, PRPF6, PRPF8, PRPF31, SNRNP200, TXNL4A, WDR57, SNRNP40, DDX23, CD2BP2, PPIH, NHP2L1, EFTUD2, SART1 and USP39. Interacts with RAD17 and PRPF31. The complex formed by SNU13 and PRPF31 binds U4 snRNA. The complex formed by SNU13 and PRPF31 also binds U4atac snRNA, a characteristic component of specific, less abundant spliceosomal complexes. Part of the small subunit (SSU) processome, composed of more than 70 proteins and the RNA chaperone small nucleolar RNA (snoRNA) U3. Core component of box C/D small nucleolar ribonucleoprotein (snoRNP) particles; the core proteins SNU13, NOP56, NOP58 and FBL or FBLL1 assemble stepwise onto the snoRNA.

It is found in the nucleus. Its subcellular location is the nucleolus. In terms of biological role, part of the small subunit (SSU) processome, first precursor of the small eukaryotic ribosomal subunit. During the assembly of the SSU processome in the nucleolus, many ribosome biogenesis factors, an RNA chaperone and ribosomal proteins associate with the nascent pre-rRNA and work in concert to generate RNA folding, modifications, rearrangements and cleavage as well as targeted degradation of pre-ribosomal RNA by the RNA exosome. Involved in pre-mRNA splicing as component of the spliceosome. Binds to the 5'-stem-loop of U4 snRNA and thereby contributes to spliceosome assembly. The protein undergoes a conformational change upon RNA-binding. Core component of box C/D small nucleolar ribonucleoprotein (snoRNP) complexes that function in methylation of multiple sites on ribosomal RNAs (rRNAs) and messenger RNAs (mRNAs). The protein is NHP2-like protein 1 of Bos taurus (Bovine).